The chain runs to 207 residues: Large ribosomal subunit protein uL4 (207 aa).

The interval 49-78 (HAVKNRSAVSGGGRKPWRQKGTGRARQGSI) is disordered.

Belongs to the universal ribosomal protein uL4 family. In terms of assembly, part of the 50S ribosomal subunit.

Functionally, one of the primary rRNA binding proteins, this protein initially binds near the 5'-end of the 23S rRNA. It is important during the early stages of 50S assembly. It makes multiple contacts with different domains of the 23S rRNA in the assembled 50S subunit and ribosome. Forms part of the polypeptide exit tunnel. The polypeptide is Large ribosomal subunit protein uL4 (Streptococcus pneumoniae serotype 19F (strain G54)).